A 901-amino-acid polypeptide reads, in one-letter code: MLIKLLTKVFGSRNDRTLRRMRKAVSLINAMEPEMEKLSDDELKAKTNEFRARIEKGESVESLIPEAFAVVREASKRVFGMRHFDVQLLGGMVLNDRCIAEMRTGEGKTLTATLPAYLNALSGKGVHVVTVNDYLAQRDAENNRPLFEFLGMSVGINLPGMPAPAKREAYAADITYGTNNEYGFDYLRDNMAFSPEERVQRKLHYALVDEVDSILIDEARTPLIISGPAEDSSEMYKKVNKIIPHLIRQEKEDSDTFQGEGHFSVDEKARQVNLTERGLVLIEELLVQEGIMDEGESLYSPGNIMLMHHVTAALRAHALFTRDVDYIVKDGEVIIVDEHTGRTMQGRRWSDGLHQAVEAKEGVEIQNENQTLASITFQNYFRLYEKLAGMTGTADTEAFEFSSIYKLDTVVVPTNRPMIRKDLPDLVYMTEAEKIQAIIEDIKERTANGQPVLVGTISIEKSEVVSRELTKAGIKHNVLNAKFHANEAGIVAQAGYPAAVTIATNMAGRGTDIMLGGSWQAEVAALEAPTEEQIAQIKADWQARHDAVLAAGGLHIIGTERHESRRIDNQLRGRSGRQGDPGSSRFYLSMEDALMRIFASDRVSGMMRKLGMKPGEAIEHPWVTKAIANAQRKVESRNFDIRKQLLEYDDVANDQRRAIYSQRNELLDVSDVSDTINSIREDVFKATIDAYIPPQSLEEMWDIPGLQERLKNDFDLELPIAEWLDKEPELHEETLRERILAQSIELYQRKEEVVGAEMMRHFEKGVMLQTLDSLWKEHLAAMDYLRQGIHLRGYAQKDPKQEYKRESFAMFAAMLESLKYEVISTLSKVQVRMPEEVEAMEMQRREEAERLALMQQLSHQDDDAAVAADLAAQTGERKIGRNDPCPCGSGKKYKQCHGRLS.

ATP-binding positions include Q87, 105-109, and D512; that span reads GEGKT. Positions 885, 887, 896, and 897 each coordinate Zn(2+).

Belongs to the SecA family. In terms of assembly, monomer and homodimer. Part of the essential Sec protein translocation apparatus which comprises SecA, SecYEG and auxiliary proteins SecDF-YajC and YidC. Zn(2+) serves as cofactor.

It is found in the cell inner membrane. The protein resides in the cytoplasm. The catalysed reaction is ATP + H2O + cellular proteinSide 1 = ADP + phosphate + cellular proteinSide 2.. Part of the Sec protein translocase complex. Interacts with the SecYEG preprotein conducting channel. Has a central role in coupling the hydrolysis of ATP to the transfer of proteins into and across the cell membrane, serving both as a receptor for the preprotein-SecB complex and as an ATP-driven molecular motor driving the stepwise translocation of polypeptide chains across the membrane. This chain is Protein translocase subunit SecA, found in Salmonella arizonae (strain ATCC BAA-731 / CDC346-86 / RSK2980).